We begin with the raw amino-acid sequence, 206 residues long: Protease (206 aa).

Active-site residues include H54, D71, and C122.

It belongs to the peptidase C5 family. Interacts with protease cofactor pVI-C; this interaction is necessary for protease activation.

Its subcellular location is the virion. The protein resides in the host nucleus. It catalyses the reaction Cleaves proteins of the adenovirus and its host cell at two consensus sites: -Yaa-Xaa-Gly-Gly-|-Xaa- and -Yaa-Xaa-Gly-Xaa-|-Gly- (in which Yaa is Met, Ile or Leu, and Xaa is any amino acid).. With respect to regulation, requires DNA and protease cofactor for maximal activation. Inside nascent virions, becomes partially activated by binding to the viral DNA, allowing it to cleave the cofactor that binds to the protease and fully activates it. Actin, like the viral protease cofactor, seems to act as a cofactor in the cleavage of cytokeratin 18 and of actin itself. In terms of biological role, cleaves viral precursor proteins (pTP, pIIIa, pVI, pVII, pVIII, and pX) inside newly assembled particles giving rise to mature virions. Protease complexed to its cofactor slides along the viral DNA to specifically locate and cleave the viral precursors. Mature virions have a weakened organization compared to the unmature virions, thereby facilitating subsequent uncoating. Without maturation, the particle lacks infectivity and is unable to uncoat. Late in adenovirus infection, in the cytoplasm, may participate in the cytoskeleton destruction. Cleaves host cell cytoskeletal keratins K7 and K18. This is Protease from Homo sapiens (Human).